Reading from the N-terminus, the 200-residue chain is Dephospho-CoA kinase (200 aa).

The 197-residue stretch at 4 to 200 (VIGLTGGIAS…AILKKWNIID (197 aa)) folds into the DPCK domain. Residue 12 to 17 (ASGKST) coordinates ATP.

Belongs to the CoaE family.

The protein resides in the cytoplasm. The catalysed reaction is 3'-dephospho-CoA + ATP = ADP + CoA + H(+). It participates in cofactor biosynthesis; coenzyme A biosynthesis; CoA from (R)-pantothenate: step 5/5. Catalyzes the phosphorylation of the 3'-hydroxyl group of dephosphocoenzyme A to form coenzyme A. The chain is Dephospho-CoA kinase from Bacillus anthracis.